Here is a 310-residue protein sequence, read N- to C-terminus: 4-hydroxy-3-methylbut-2-enyl diphosphate reductase (310 aa).

A [4Fe-4S] cluster-binding site is contributed by C12. (2E)-4-hydroxy-3-methylbut-2-enyl diphosphate-binding residues include H41 and H74. Residues H41 and H74 each contribute to the dimethylallyl diphosphate site. H41 and H74 together coordinate isopentenyl diphosphate. A [4Fe-4S] cluster-binding site is contributed by C96. H124 contacts (2E)-4-hydroxy-3-methylbut-2-enyl diphosphate. Dimethylallyl diphosphate is bound at residue H124. H124 contributes to the isopentenyl diphosphate binding site. E126 functions as the Proton donor in the catalytic mechanism. A (2E)-4-hydroxy-3-methylbut-2-enyl diphosphate-binding site is contributed by T167. C197 contributes to the [4Fe-4S] cluster binding site. Positions 225, 226, 227, and 269 each coordinate (2E)-4-hydroxy-3-methylbut-2-enyl diphosphate. Residues S225, S226, N227, and S269 each coordinate dimethylallyl diphosphate. Positions 225, 226, 227, and 269 each coordinate isopentenyl diphosphate.

Belongs to the IspH family. [4Fe-4S] cluster is required as a cofactor.

It carries out the reaction isopentenyl diphosphate + 2 oxidized [2Fe-2S]-[ferredoxin] + H2O = (2E)-4-hydroxy-3-methylbut-2-enyl diphosphate + 2 reduced [2Fe-2S]-[ferredoxin] + 2 H(+). The catalysed reaction is dimethylallyl diphosphate + 2 oxidized [2Fe-2S]-[ferredoxin] + H2O = (2E)-4-hydroxy-3-methylbut-2-enyl diphosphate + 2 reduced [2Fe-2S]-[ferredoxin] + 2 H(+). Its pathway is isoprenoid biosynthesis; dimethylallyl diphosphate biosynthesis; dimethylallyl diphosphate from (2E)-4-hydroxy-3-methylbutenyl diphosphate: step 1/1. It functions in the pathway isoprenoid biosynthesis; isopentenyl diphosphate biosynthesis via DXP pathway; isopentenyl diphosphate from 1-deoxy-D-xylulose 5-phosphate: step 6/6. Catalyzes the conversion of 1-hydroxy-2-methyl-2-(E)-butenyl 4-diphosphate (HMBPP) into a mixture of isopentenyl diphosphate (IPP) and dimethylallyl diphosphate (DMAPP). Acts in the terminal step of the DOXP/MEP pathway for isoprenoid precursor biosynthesis. The protein is 4-hydroxy-3-methylbut-2-enyl diphosphate reductase of Tolumonas auensis (strain DSM 9187 / NBRC 110442 / TA 4).